The primary structure comprises 142 residues: Universal stress protein G (142 aa).

Belongs to the universal stress protein A family.

This chain is Universal stress protein G (uspG), found in Escherichia coli O157:H7.